The primary structure comprises 113 residues: Gamma-glutamylcyclotransferase family protein YtfP (113 aa).

The protein belongs to the gamma-glutamylcyclotransferase family.

In Escherichia coli O157:H7, this protein is Gamma-glutamylcyclotransferase family protein YtfP (ytfP).